Consider the following 127-residue polypeptide: Large ribosomal subunit protein bL20 (127 aa).

It belongs to the bacterial ribosomal protein bL20 family.

In terms of biological role, binds directly to 23S ribosomal RNA and is necessary for the in vitro assembly process of the 50S ribosomal subunit. It is not involved in the protein synthesizing functions of that subunit. This Bifidobacterium adolescentis (strain ATCC 15703 / DSM 20083 / NCTC 11814 / E194a) protein is Large ribosomal subunit protein bL20.